The chain runs to 469 residues: MGIKGLTGLLSQHAPKAIKEIKTLFGRKVAIDASMSIYQFLIAVRQKDGELLTNDAGETTRYLMGLFYRTLRIVENGIKPAYIFDGKPPELKKGVLSKRLERREEAKEEGEEAKETGTVEDVDRFSRRTVKVTREHNQECQRLLRLMGIPVVIAPSEAEAQCAELARGGKVYIALYYAAGSEDMDTLTFNAPILFRHLTFSEAKKQPISEINLKEALEGPLYSFPTFIDLCILLGCDYLEPIKGVGPKSALKLIREYGGLKGVVKHLREKAATQKAAQAAVESDEESEHEEEDEPAPTSDVEMPDPVEEDQDGEEEAEPKSSQATPKKKKASSKTKEKRKGKGGGGMQIPEEWPWEEAKKIFKRPSHVHRDLEWTNPDVDGLVQFLVNEKGFNEDRVRKGAEKLQKFLNSKQQGRLDGFFSVKPKEKAAAPAPVGKAKGKGKIDAKAKGTKRKVDEKAESSAGKKPRKK.

The tract at residues 1 to 103 (MGIKGLTGLL…GVLSKRLERR (103 aa)) is N-domain. Asp32 is a binding site for Mg(2+). DNA contacts are provided by Arg45 and Arg69. Mg(2+)-binding residues include Asp85, Glu157, Glu159, Asp183, and Asp185. The tract at residues 121 to 257 (DVDRFSRRTV…KSALKLIREY (137 aa)) is I-domain. Position 157 (Glu157) interacts with DNA. Positions 235 and 237 each coordinate DNA. Position 237 (Asp237) interacts with Mg(2+). The interval 274 to 354 (QKAAQAAVES…GGMQIPEEWP (81 aa)) is disordered. Composition is skewed to acidic residues over residues 282–295 (ESDE…EDEP) and 302–317 (EMPD…EEEA). Residues 326–342 (PKKKKASSKTKEKRKGK) show a composition bias toward basic residues. The interaction with PCNA stretch occupies residues 412–420 (QQGRLDGFF). The disordered stretch occupies residues 424–469 (PKEKAAAPAPVGKAKGKGKIDAKAKGTKRKVDEKAESSAGKKPRKK). Over residues 441-459 (GKIDAKAKGTKRKVDEKAE) the composition is skewed to basic and acidic residues.

Belongs to the XPG/RAD2 endonuclease family. FEN1 subfamily. As to quaternary structure, interacts with PCNA. Three molecules of FEN1 bind to one PCNA trimer with each molecule binding to one PCNA monomer. PCNA stimulates the nuclease activity without altering cleavage specificity. Mg(2+) is required as a cofactor. Post-translationally, phosphorylated. Phosphorylation upon DNA damage induces relocalization to the nuclear plasma.

Its subcellular location is the nucleus. It localises to the nucleolus. The protein resides in the nucleoplasm. It is found in the mitochondrion. Functionally, structure-specific nuclease with 5'-flap endonuclease and 5'-3' exonuclease activities involved in DNA replication and repair. During DNA replication, cleaves the 5'-overhanging flap structure that is generated by displacement synthesis when DNA polymerase encounters the 5'-end of a downstream Okazaki fragment. It enters the flap from the 5'-end and then tracks to cleave the flap base, leaving a nick for ligation. Also involved in the long patch base excision repair (LP-BER) pathway, by cleaving within the apurinic/apyrimidinic (AP) site-terminated flap. Acts as a genome stabilization factor that prevents flaps from equilibrating into structures that lead to duplications and deletions. Also possesses 5'-3' exonuclease activity on nicked or gapped double-stranded DNA, and exhibits RNase H activity. Also involved in replication and repair of rDNA and in repairing mitochondrial DNA. This Laccaria bicolor (strain S238N-H82 / ATCC MYA-4686) (Bicoloured deceiver) protein is Flap endonuclease 1-B.